Consider the following 1206-residue polypeptide: Methionine synthase (1206 aa).

The region spanning 1–314 (MRVTAANQHQ…DHIREVAAAV (314 aa)) is the Hcy-binding domain. The Zn(2+) site is built by cysteine 233, cysteine 299, and cysteine 300. The region spanning 350-609 (VLMIGERTNA…IPEEQRQAAL (260 aa)) is the Pterin-binding domain. The B12-binding N-terminal domain maps to 642–735 (REAELAKLPL…HMEKSDCDFG (94 aa)). The 138-residue stretch at 740–877 (KGRIVLATVK…SAKRGEALAP (138 aa)) folds into the B12-binding domain. Methylcob(III)alamin is bound by residues 750–754 (GDVHD), histidine 753, serine 798, and alanine 856. The tract at residues 873–925 (EALAPGSPESLAAEADRNKETERKARHERSKRIAVQRKAAEEPVEVPERSDVP) is disordered. A compositionally biased stretch (basic and acidic residues) spans 886-897 (EADRNKETERKA). The segment covering 898-907 (RHERSKRIAV) has biased composition (basic residues). Residues 907-1206 (VQRKAAEEPV…HHPAAKYFNV (300 aa)) form the AdoMet activation domain. The span at 910–924 (KAAEEPVEVPERSDV) shows a compositional bias: basic and acidic residues. Residues aspartate 954, arginine 1149, and 1203-1204 (YF) contribute to the S-adenosyl-L-methionine site.

It belongs to the vitamin-B12 dependent methionine synthase family. It depends on methylcob(III)alamin as a cofactor. Zn(2+) serves as cofactor.

It catalyses the reaction (6S)-5-methyl-5,6,7,8-tetrahydrofolate + L-homocysteine = (6S)-5,6,7,8-tetrahydrofolate + L-methionine. Its pathway is amino-acid biosynthesis; L-methionine biosynthesis via de novo pathway; L-methionine from L-homocysteine (MetH route): step 1/1. In terms of biological role, catalyzes the transfer of a methyl group from methyl-cobalamin to homocysteine, yielding enzyme-bound cob(I)alamin and methionine. Subsequently, remethylates the cofactor using methyltetrahydrofolate. The sequence is that of Methionine synthase (metH) from Mycobacterium leprae (strain TN).